A 615-amino-acid polypeptide reads, in one-letter code: Zinc finger protein 181 (615 aa).

Residues 48–120 enclose the KRAB domain; that stretch reads VTFSDVAIDF…EKKLSKGLIP (73 aa). Residues Lys-153 and Lys-170 each participate in a glycyl lysine isopeptide (Lys-Gly) (interchain with G-Cter in SUMO2) cross-link. 11 consecutive C2H2-type zinc fingers follow at residues 281–303, 309–331, 337–359, 365–387, 393–415, 421–443, 449–471, 477–499, 505–527, 533–555, and 561–583; these read YTCS…WRIH, YECR…LISH, YKCI…QSTH, YECM…LRIH, YECR…QKIH, YECR…QRIH, YECN…QSIH, FECQ…LRNH, YECS…HRIH, YECI…QRIH, and YKCN…QRVH.

The protein belongs to the krueppel C2H2-type zinc-finger protein family.

It localises to the nucleus. Functionally, may be involved in transcriptional regulation. This is Zinc finger protein 181 (ZNF181) from Pongo abelii (Sumatran orangutan).